The primary structure comprises 349 residues: tRNA pseudouridine synthase D (349 aa).

Phenylalanine 27 lines the substrate pocket. Aspartate 80 functions as the Nucleophile in the catalytic mechanism. Asparagine 129 contributes to the substrate binding site. The TRUD domain occupies 155–303 (GVPNYFGAQR…VEAARRAMLL (149 aa)). Phenylalanine 329 lines the substrate pocket.

This sequence belongs to the pseudouridine synthase TruD family.

It catalyses the reaction uridine(13) in tRNA = pseudouridine(13) in tRNA. Its function is as follows. Responsible for synthesis of pseudouridine from uracil-13 in transfer RNAs. In Shigella boydii serotype 4 (strain Sb227), this protein is tRNA pseudouridine synthase D.